The sequence spans 606 residues: Vacuolar calcium ion transporter (606 aa).

The disordered stretch occupies residues 1–110; that stretch reads MSPPRRVSFP…NSLDPNPGLM (110 aa). The Cytoplasmic portion of the chain corresponds to 1–137; that stretch reads MSPPRRVSFP…PTYWGSMKAA (137 aa). A compositionally biased stretch (low complexity) spans 18–30; the sequence is PPLADSPLSSPKL. Residues 36–56 are compositionally biased toward polar residues; sequence QSSSTPIVSSNLPTDTTNSAS. The helical transmembrane segment at 138–158 threads the bilayer; sequence ITSTWLNVLLVFIPIGWALYL. The Vacuolar portion of the chain corresponds to 159–170; that stretch reads AKHNGGKDSISD. A helical transmembrane segment spans residues 171-191; the sequence is TAVFCCTFIAIIPLAGLLGFA. The Cytoplasmic segment spans residues 192-204; it reads TEEAALRLGQTLG. The chain crosses the membrane as a helical span at residues 205–225; the sequence is GLLNATLGNAVELIVAILALI. Residues 226-236 lie on the Vacuolar side of the membrane; sequence KCELQVVQSSL. The chain crosses the membrane as a helical span at residues 237–257; that stretch reads VGSILSNILLVLGMCFFAGGV. The Cytoplasmic portion of the chain corresponds to 258–272; the sequence is RFAEQAIKSTAAQLN. A helical membrane pass occupies residues 273 to 293; it reads ASLLLIAVIAVLIPSAFHFSI. Residues 294–313 lie on the Vacuolar side of the membrane; it reads SSSTSNTDASELANGEGADL. The helical transmembrane segment at 314 to 334 threads the bilayer; sequence LSMSHAVSILLLILYLGYLLF. Over 335 to 437 the chain is Cytoplasmic; that stretch reads QMWTHATYYV…EEEEETPQMN (103 aa). The segment at 376-434 is disordered; sequence DEEESYSTATTVSDAAVPPSARAEGGEVPATHGPGTAAAETGNRVEHEDAEEEEEEETP. The segment covering 423–433 has biased composition (acidic residues); that stretch reads EDAEEEEEEET. A helical transmembrane segment spans residues 438 to 458; that stretch reads VVCTIALMVIDTVLVGVTAEF. Topologically, residues 459–477 are vacuolar; sequence LVDSINGMVESNPSLSAEW. The chain crosses the membrane as a helical span at residues 478-498; that stretch reads VGLILLPIVGNAAEHFTAVSV. The Cytoplasmic portion of the chain corresponds to 499–505; sequence SVKDKLD. A helical transmembrane segment spans residues 506 to 526; it reads LSISVAVGSSIQIALFVIPVI. Residues 527 to 535 are Vacuolar-facing; it reads ELLAWTIGK. The helical transmembrane segment at 536–556 threads the bilayer; it reads PMTLLFDPYESIVLFLSVLIV. The Cytoplasmic segment spans residues 557-566; that stretch reads NQTLADGRSN. A helical membrane pass occupies residues 567–587; the sequence is WMEGMVLMMLYIIIAVSFWYY. Residues 588-606 lie on the Vacuolar side of the membrane; that stretch reads PGSTTATLLGCQDSSSVTG.

This sequence belongs to the Ca(2+):cation antiporter (CaCA) (TC 2.A.19) family.

The protein resides in the vacuole membrane. In terms of biological role, has a role in promoting intracellular calcium ion sequestration via the exchange of calcium ions for hydrogen ions across the vacuolar membrane. The polypeptide is Vacuolar calcium ion transporter (Cryptococcus neoformans var. grubii serotype A (strain H99 / ATCC 208821 / CBS 10515 / FGSC 9487) (Filobasidiella neoformans var. grubii)).